The chain runs to 80 residues: Small ribosomal subunit protein uS17 (80 aa).

The protein belongs to the universal ribosomal protein uS17 family. Part of the 30S ribosomal subunit.

Functionally, one of the primary rRNA binding proteins, it binds specifically to the 5'-end of 16S ribosomal RNA. In Cereibacter sphaeroides (strain ATCC 17025 / ATH 2.4.3) (Rhodobacter sphaeroides), this protein is Small ribosomal subunit protein uS17.